The primary structure comprises 379 residues: Class V chitinase CHIT5b (379 aa).

Positions 1-26 (MANILNLKHLLTLALILLALATKSST) are cleaved as a signal peptide. A GH18 domain is found at 34–379 (RVKGIYWLEN…TQASKAWKLV (346 aa)). N-linked (GlcNAc...) asparagine glycosylation is found at asparagine 68, asparagine 109, and asparagine 128. Residue glutamate 147 is the Proton donor of the active site. Asparagine 192, asparagine 227, and asparagine 241 each carry an N-linked (GlcNAc...) asparagine glycan.

The protein belongs to the glycosyl hydrolase 18 family. Chitinase class V subfamily.

It carries out the reaction Random endo-hydrolysis of N-acetyl-beta-D-glucosaminide (1-&gt;4)-beta-linkages in chitin and chitodextrins.. Its pathway is glycan degradation; chitin degradation. Possesses chitinase activity in vitro toward glycol chitin, carboxymethyl-chitin, colloidal chitin, and the chitin oligosaccharides (N-acetylglucosamine) (GlcNAc)6 and (GlcNAc)5. Hydrolyzes (GlcNAc)6 into (GlcNAc)4 and (GlcNAc)2, or two (GlcNAc)3 molecules. Has the capacity to reduce hyphal growth of the fungus Trichoderma viride in an agar-plate bioassay. The protein is Class V chitinase CHIT5b of Medicago truncatula (Barrel medic).